Reading from the N-terminus, the 533-residue chain is E3 ubiquitin-protein ligase arih1l (533 aa).

Disordered regions lie at residues 1-35 (MDSD…EAVD) and 48-73 (PAVA…QEDE). The interval 158-369 (QDLPCQICYL…SAWYNCNRYN (212 aa)) is TRIAD supradomain. Zn(2+) contacts are provided by Cys162, Cys165, Cys179, His181, Cys184, Cys187, Cys207, Cys212, Cys252, Cys257, Cys273, Cys275, Cys280, Cys283, His288, Cys293, Cys320, and Cys323. An RING-type 1 zinc finger spans residues 162-212 (CQICYLNYPNSYFTGLECGHKFCMQCWGDYLTTKIIEEGMGQTISCPAHNC). The IBR-type zinc finger occupies 232–293 (LKYQHLITNS…GENWHDPVKC (62 aa)). An RING-type 2; atypical zinc finger spans residues 320-351 (CPKCHVTIEKDGGCNHMVCRNQNCKAEFCWVC). Residue Cys333 is part of the active site. Zn(2+) is bound by residues Cys338, Cys343, Cys348, Cys351, His358, and Cys365. Positions 409 to 425 (KLYAQVKQKMEEMQQHN) form a coiled coil.

Belongs to the RBR family. Ariadne subfamily.

The protein resides in the cytoplasm. The enzyme catalyses [E2 ubiquitin-conjugating enzyme]-S-ubiquitinyl-L-cysteine + [acceptor protein]-L-lysine = [E2 ubiquitin-conjugating enzyme]-L-cysteine + [acceptor protein]-N(6)-ubiquitinyl-L-lysine.. It participates in protein modification; protein ubiquitination. In terms of biological role, E3 ubiquitin-protein ligase, which catalyzes polyubiquitination of target proteins together with ubiquitin-conjugating enzyme E2 ube2l3. This is E3 ubiquitin-protein ligase arih1l (arih1l) from Danio rerio (Zebrafish).